The sequence spans 1684 residues: Latrophilin Cirl (1684 aa).

Residues 1 to 765 (MASNNYIQIM…LFTMFDGNMR (765 aa)) are Extracellular-facing. The region spanning 21–110 (ACEGKKLTIE…KYLEAHYQCV (90 aa)) is the SUEL-type lectin domain. 4 N-linked (GlcNAc...) asparagine glycosylation sites follow: asparagine 138, asparagine 251, asparagine 297, and asparagine 336. The tract at residues 181 to 300 (PPATHATPPG…GPSVSSNGSA (120 aa)) is disordered. 2 stretches are compositionally biased toward polar residues: residues 250–260 (SNATAPSNTRI) and 278–300 (KSSP…NGSA). Positions 370–391 (SFDEDDEEMAGTSTTTPMSTSS) are disordered. Positions 381-391 (TSTTTPMSTSS) are enriched in low complexity. 4 N-linked (GlcNAc...) asparagine glycosylation sites follow: asparagine 396, asparagine 653, asparagine 701, and asparagine 728. The region spanning 559-752 (RSVVQKVKNI…AILMDVVDEH (194 aa)) is the GAIN-B domain. Intrachain disulfides connect cysteine 707-cysteine 734 and cysteine 722-cysteine 736. Residues 707-752 (CVFWNYIDHAWSANGCSLESTNRTHSVCSCNHLTNFAILMDVVDEH) form a GPS region. A helical membrane pass occupies residues 766–786 (IFIYISIAICVVFIVIALLTL). Over 787–799 (KLFNGVFVKSART) the chain is Cytoplasmic. A helical transmembrane segment spans residues 800-820 (SIYINIYICLLAIELLFLLGI). Over 821-826 (EQTETS) the chain is Extracellular. Residues 827–847 (IFCGFITVFLHCAILSGTSWF) traverse the membrane as a helical segment. The Cytoplasmic segment spans residues 848-873 (CYEAFHSYSTLTSDELLLEVDQTPKV). A helical transmembrane segment spans residues 874–894 (NCYYLLSYGLSLSVVAISLVI). Residues 895-918 (NPSTYTQNDYCVLMEANAVFYATF) lie on the Extracellular side of the membrane. A helical membrane pass occupies residues 919 to 939 (VAPVLIFFMAAIGYTFLSWII). The Cytoplasmic segment spans residues 940 to 966 (MCRKSRTGLKTKEHTRLATVRFDIRCS). The helical transmembrane segment at 967 to 987 (FVFFLLLSAVWCSAYFYLRGA) threads the bilayer. Over 988–994 (KMDEDVT) the chain is Extracellular. Residues 995 to 1015 (GIYGYNFICFNTLLGLYIFVF) form a helical membrane-spanning segment. At 1016 to 1684 (HCIQNEKIRR…VRCYLEPLAK (669 aa)) the chain is on the cytoplasmic side. The tract at residues 1080–1100 (PLGTNDDAHDEQQQQQHMSAT) is disordered. A phosphoserine mark is found at serine 1156, serine 1247, and serine 1254. Disordered regions lie at residues 1228–1255 (KPNS…LHSR), 1270–1353 (KTKP…APPP), 1441–1520 (SRYG…LPPQ), and 1587–1669 (SMRG…SAML). Low complexity predominate over residues 1298–1314 (QQQQQLRQQRQQQQQQL). Serine 1315 and serine 1316 each carry phosphoserine. Positions 1328 to 1348 (LHLQHQQQQQQQRRAGGQQQL) are enriched in low complexity. Residues 1455-1466 (RNQQQQQHSLAQ) show a composition bias toward polar residues. 2 stretches are compositionally biased toward acidic residues: residues 1476–1489 (DEDD…EETT) and 1499–1512 (CDEE…DMED). The span at 1631 to 1654 (QQLQKLSPQSTTSSSSHTSHSNPH) shows a compositional bias: low complexity.

The protein belongs to the G-protein coupled receptor 2 family. LN-TM7 subfamily. Forms a heterodimer, consisting of a large extracellular region non-covalently linked to a seven-transmembrane moiety. Post-translationally, proteolytically cleaved into 2 subunits, an extracellular subunit and a seven-transmembrane subunit.

It localises to the cell membrane. This chain is Latrophilin Cirl, found in Drosophila persimilis (Fruit fly).